We begin with the raw amino-acid sequence, 170 residues long: Cyclic pyranopterin monophosphate synthase (170 aa).

Substrate is bound by residues 75–77 and 115–116; these read MCH and ME. Asp-130 is a catalytic residue.

Belongs to the MoaC family. In terms of assembly, homohexamer; trimer of dimers.

It carries out the reaction (8S)-3',8-cyclo-7,8-dihydroguanosine 5'-triphosphate = cyclic pyranopterin phosphate + diphosphate. It participates in cofactor biosynthesis; molybdopterin biosynthesis. Functionally, catalyzes the conversion of (8S)-3',8-cyclo-7,8-dihydroguanosine 5'-triphosphate to cyclic pyranopterin monophosphate (cPMP). In Bacillus subtilis (strain 168), this protein is Cyclic pyranopterin monophosphate synthase.